Here is a 151-residue protein sequence, read N- to C-terminus: Monooxygenase nsrQ (151 aa).

It belongs to the avfA family.

Its pathway is secondary metabolite biosynthesis. In terms of biological role, monooxygenase; part of the gene cluster that mediates the biosynthesis of the tetrahydroxanthone dimer neosartorin, which exhibits antibacterial activity. The two different monomeric units appear to be synthesized by the same set of enzymes, among which the Baeyer-Villiger monooxygenase nsrF is the key enzyme for the divergence of the biosynthetic routes. The pathway begins with the synthesis of atrochrysone thioester by the polyketide synthase nsrB. The atrochrysone carboxyl ACP thioesterase nsrC then breaks the thioester bond and releases the atrochrysone carboxylic acid from AacuL. Atrochrysone carboxylic acid is decarboxylated by the decarboxylase nsrE, and oxidized by the anthrone oxygenase nsrD to yield emodin. Emodin is then reduced to emodin hydroquinone by the oxidoreductase nsrR. A-ring reduction by the short chain dehydrogenase nsrJ, dehydration by the scytalone dehydratase-like protein nsrI and probable spontaneous re-oxidation, results in overall deoxygenation to chrysophanol. The Baeyer-Villiger monooxygenase nsrF accepts chrysophanol as a substrate to insert one oxygen atom at two different positions to yield the precursors of both monomric units. NsrF is promiscuous/flexible in interacting with the 2 (non methylated and methylated) aromatic rings of chrysophanol, thus diverging the biosynthetic pathway at this point. After the hydrolysis of the lactones, methylesterification by the methyltransferase nsrG yields respectively moniliphenone and 2,2',6'-trihydroxy-4-methyl-6-methoxya-cyldiphenylmethanone. The next steps are the hydroxylation by the FAD-dependent monooxygenase nsrK, followed by isomerization by the monooxygenase nsrQ. The short chain dehydrogenase/reductase nsrO then catalyzes the C-5 ketoreduction to give the xanthone skeleton of blennolide C and 5-acetylblennolide A. The acetyltransferase nsrL has a strict substrate specificity and uses only blennolide A but not blennolide C to yield 5-acetylblennolide A as the single-acetylated product. In the final step of the biosynthesis, the heterodimerization of the 2 xanthones, blennolide C and 5-acetylblennolide A, is catalyzed by the cytochrome P450 monooxygenase nsrP. NsrP can utilize at least three different xanthones as its substrates to perform the dimerization reaction. This Aspergillus novofumigatus (strain IBT 16806) protein is Monooxygenase nsrQ.